Reading from the N-terminus, the 219-residue chain is Dual specificity phosphatase 29 (219 aa).

The region spanning 53–201 (HVNEVWPKLY…LRELDRQLVQ (149 aa)) is the Tyrosine-protein phosphatase domain. 145-152 (HCVMGRSR) provides a ligand contact to substrate. Residue cysteine 146 is the Phosphocysteine intermediate of the active site.

Belongs to the protein-tyrosine phosphatase family. Non-receptor class dual specificity subfamily. In terms of assembly, homodimer. Interacts with PRKAA2.

It is found in the cytoplasm. It localises to the nucleus. It catalyses the reaction O-phospho-L-tyrosyl-[protein] + H2O = L-tyrosyl-[protein] + phosphate. The enzyme catalyses O-phospho-L-seryl-[protein] + H2O = L-seryl-[protein] + phosphate. The catalysed reaction is O-phospho-L-threonyl-[protein] + H2O = L-threonyl-[protein] + phosphate. Dual specificity phosphatase able to dephosphorylate phosphotyrosine, phosphoserine and phosphothreonine residues within the same substrate, with a preference for phosphotyrosine as a substrate. Involved in the modulation of intracellular signaling cascades. May regulate glucose metabolism by activating, AMPK, an energy sensor protein kinase. Affects MAP kinase signaling though modulation of the ERK1/2 cascade in skeletal muscle promoting muscle cell differentiation, development and atrophy. This chain is Dual specificity phosphatase 29 (DUSP29), found in Bos taurus (Bovine).